A 308-amino-acid polypeptide reads, in one-letter code: UPF0282 protein SSO3251 (308 aa).

Belongs to the UPF0282 family.

The sequence is that of UPF0282 protein SSO3251 from Saccharolobus solfataricus (strain ATCC 35092 / DSM 1617 / JCM 11322 / P2) (Sulfolobus solfataricus).